The following is a 701-amino-acid chain: Elongation factor G (701 aa).

Residues 8–290 (ERYRNIGISA…AVVDYLPAPT (283 aa)) form the tr-type G domain. Residues 17–24 (AHIDAGKT), 88–92 (DTPGH), and 142–145 (NKMD) contribute to the GTP site.

Belongs to the TRAFAC class translation factor GTPase superfamily. Classic translation factor GTPase family. EF-G/EF-2 subfamily.

It is found in the cytoplasm. Its function is as follows. Catalyzes the GTP-dependent ribosomal translocation step during translation elongation. During this step, the ribosome changes from the pre-translocational (PRE) to the post-translocational (POST) state as the newly formed A-site-bound peptidyl-tRNA and P-site-bound deacylated tRNA move to the P and E sites, respectively. Catalyzes the coordinated movement of the two tRNA molecules, the mRNA and conformational changes in the ribosome. The protein is Elongation factor G of Aeromonas salmonicida (strain A449).